A 248-amino-acid polypeptide reads, in one-letter code: Stress-related protein (248 aa).

The protein belongs to the REF/SRPP family.

The protein is Stress-related protein (SRP) of Vitis riparia (Frost grape).